Here is a 656-residue protein sequence, read N- to C-terminus: Chaperone protein DnaK (656 aa).

Position 204 is a phosphothreonine; by autocatalysis (Thr204). Residues 602 to 656 (KLAERVYAKKGGAAGAPPGGEAEGEPQAQAGGKKEDVVDAEFEEVKDEKKKDEDK) are disordered. The span at 620–632 (GGEAEGEPQAQAG) shows a compositional bias: low complexity. The segment covering 647–656 (KDEKKKDEDK) has biased composition (basic and acidic residues).

It belongs to the heat shock protein 70 family.

Functionally, acts as a chaperone. This is Chaperone protein DnaK from Coxiella burnetii (strain CbuG_Q212) (Coxiella burnetii (strain Q212)).